A 154-amino-acid chain; its full sequence is MAYLSECRLRLEKGFILDGVAVSTAARAYGRSRPKLWSAIPPYNAQQDYHARSYFQSHVVPPLLRKTDQDHGGTGRDGWIVDYIHIFGQGQRYLNRRNWAGTGHSLQQVTGHDHYNADLKPIDGFNGRFGYRRNTPALRQSTSVFGEVTHFPLF.

The sequence is that of Sperm microtubule associated protein 1 from Homo sapiens (Human).